The following is a 339-amino-acid chain: Catalase-related peroxidase (339 aa).

A signal peptide spans 1-31; that stretch reads MIRIRNRWFRWLAIALASLVASIGIATVGFA. His-58 is a catalytic residue. Residue Tyr-328 participates in heme binding.

It belongs to the catalase family. Heme is required as a cofactor.

Its subcellular location is the periplasm. In terms of biological role, has an organic peroxide-dependent peroxidase activity. This chain is Catalase-related peroxidase (srpA), found in Synechococcus elongatus (strain ATCC 33912 / PCC 7942 / FACHB-805) (Anacystis nidulans R2).